A 3423-amino-acid chain; its full sequence is Genome polyprotein (3423 aa).

Residues 1–25 (MKNPKKKSGGFRIVNMLKRGVARVS) form a disordered region. The Cytoplasmic segment spans residues 1–104 (MKNPKKKSGG…INARKEKKRR (104 aa)). Positions 37-72 (LLLGHGPIRMVLAILAFLRFTAIKPSLGLINRWGSV) are hydrophobic; homodimerization of capsid protein C. A propeptide spans 105 to 122 (GTDTSVGIVGLLLTTAMA) (ER anchor for capsid protein C, removed in mature form by serine protease NS3). A helical membrane pass occupies residues 105 to 125 (GTDTSVGIVGLLLTTAMAVEV). Topologically, residues 126 to 249 (TRRGNAYYMY…YTKHLIRVEN (124 aa)) are extracellular. N-linked (GlcNAc...) asparagine; by host glycosylation is present at Asn192. Residues 250-269 (WIFRNPGFALAAAAIAWLLG) traverse the membrane as a helical segment. The Cytoplasmic portion of the chain corresponds to 270 to 274 (SSTSQ). The helical transmembrane segment at 275 to 290 (KVIYLVMILLIAPAYS) threads the bilayer. The Extracellular segment spans residues 291–745 (IRCIGVSNRD…HQIFGAAFKS (455 aa)). Lys328 participates in a covalent cross-link: Glycyl lysine isopeptide (Lys-Gly) (interchain with G-Cter in ubiquitin). Intrachain disulfides connect Cys350–Cys406 and Cys382–Cys411. Positions 388-401 (DRGWGNGCGLFGKG) are fusion peptide. An N-linked (GlcNAc...) asparagine; by host glycan is attached at Asn444. 2 cysteine pairs are disulfide-bonded: Cys480/Cys581 and Cys598/Cys629. A Glycyl lysine isopeptide (Lys-Gly) (interchain with G-Cter in ubiquitin) cross-link involves residue Lys571. Residues 746 to 767 (LFGGMSWFSQILIGTLLVWLGL) form a helical membrane-spanning segment. Residues 768–773 (NTKNGS) are Cytoplasmic-facing. The chain crosses the membrane as a helical span at residues 774–794 (ISLMCLALGGVLIFLSTAVSA). At 795–1177 (DVGCSVDFSK…EGLKKRMTTK (383 aa)) the chain is on the lumenal side. Cystine bridges form between Cys798–Cys809, Cys849–Cys937, Cys973–Cys1017, Cys1074–Cys1123, Cys1085–Cys1106, and Cys1107–Cys1110. N-linked (GlcNAc...) asparagine; by host glycosylation is found at Asn924 and Asn1001. Residues 1178-1198 (IIISTSMAVLVAMILGGFSMS) traverse the membrane as a helical segment. Over 1199 to 1220 (DLAKLAILMGATFAEMNTGGDV) the chain is Cytoplasmic. Residues 1221–1241 (AHLALIAAFKVRPALLVSFIF) form a helical membrane-spanning segment. Residues 1242–1270 (RANWTPRESMLLALASCLLQTAISALEGD) are Lumenal-facing. The chain crosses the membrane as a helical span at residues 1271–1291 (LMVPINGFALAWLAIRAMVVP). At 1292-1295 (RTDN) the chain is on the cytoplasmic side. Residues 1296 to 1316 (ITLAILAALTPLARGTLLVAW) traverse the membrane as a helical segment. Residues 1317 to 1345 (RAGLATCGGFMLLSLKGKGSVKKNLPFVM) are Lumenal-facing. Residues 1346-1366 (ALGLTAVRLVDPINVVGLLLL) traverse the membrane as a helical segment. Residues 1367–1373 (TRSGKRS) lie on the Cytoplasmic side of the membrane. The chain crosses the membrane as a helical span at residues 1374–1394 (WPPSEVLTAVGLICALAGGFA). Residues 1395–1397 (KAD) are Lumenal-facing. A helical membrane pass occupies residues 1398-1418 (IEMAGPMAAVGLLIVSYVVSG). Residues 1419 to 1472 (KSVDMYIERAGDITWEKDAEVTGNSPRLDVALDESGDFSLVEDDGPPMREIILK) lie on the Cytoplasmic side of the membrane. Residues 1425–1464 (IERAGDITWEKDAEVTGNSPRLDVALDESGDFSLVEDDGP) form an interacts with and activates NS3 protease region. The interval 1429–1451 (GDITWEKDAEVTGNSPRLDVALD) is disordered. The helical intramembrane region spans 1473–1493 (VVLMAICGMNPIAIPFAAGAW). The Lumenal portion of the chain corresponds to 1494–2170 (YVYVKTGKRS…KAAAAQLPET (677 aa)). One can recognise a Peptidase S7 domain in the interval 1503 to 1680 (SGALWDVPAP…RREEETPVEC (178 aa)). Active-site charge relay system; for serine protease NS3 activity residues include His1553, Asp1577, and Ser1637. The region spanning 1683–1839 (PSMLKKKQLT…DSNSPIMDTE (157 aa)) is the Helicase ATP-binding domain. The important for RNA-binding stretch occupies residues 1687 to 1690 (KKKQ). 1696–1703 (LHPGAGKT) lines the ATP pocket. The DEAH box motif lies at 1787–1790 (DEAH). The Helicase C-terminal domain maps to 1834–2013 (PIMDTEVEVP…GLIASLYRPE (180 aa)). Lys1891 carries the N6-acetyllysine; by host modification. Residues 2171–2191 (LETIMLLGLLGTVSLGIFFVL) form a helical membrane-spanning segment. At 2192–2195 (MRNK) the chain is on the lumenal side. Residues 2196 to 2216 (GIGKMGFGMVTLGASAWLMWL) constitute an intramembrane region (helical). Residues 2217 to 2218 (SE) lie on the Cytoplasmic side of the membrane. The chain crosses the membrane as a helical span at residues 2219–2239 (IEPARIACVLIVVFLLLVVLI). At 2240-2254 (PEPEKQRSPQDNQMA) the chain is on the lumenal side. The helical intramembrane region spans 2255–2269 (IIIMVAVGLLGLITA). Topologically, residues 2270–2307 (NELGWLERTKSDLSHLMGRREEGATIGFSMDIDLRPAS) are lumenal. The segment at residues 2308–2328 (AWAIYAALTTFITPAVQHAVT) is an intramembrane region (helical). The Lumenal segment spans residues 2329-2344 (TSYNNYSLMAMATQAG). Residues 2345-2365 (VLFGMGKGMPFYAWDFGVPLL) form a helical membrane-spanning segment. The Cytoplasmic segment spans residues 2366–2375 (MIGCYSQLTP). A helical membrane pass occupies residues 2376–2396 (LTLIVAIILLVAHYMYLIPGL). Residues 2397–2441 (QAAAARAAQKRTAAGIMKNPVVDGIVVTDIDTMTIDPQVEKKMGQ) are Lumenal-facing. The helical transmembrane segment at 2442 to 2462 (VLLIAVAVSSAILSRTAWGWG) threads the bilayer. Over 2463 to 3423 (EAGALITAAT…GEEGSTPGVL (961 aa)) the chain is Cytoplasmic. In terms of domain architecture, mRNA cap 0-1 NS5-type MT spans 2521-2785 (GGGTGETLGE…DVNLGSGTRA (265 aa)). 2533–2539 (KARLNQM) contributes to the GTP binding site. Ser2576 contacts S-adenosyl-L-methionine. The residue at position 2576 (Ser2576) is a Phosphoserine. The For 2'-O-MTase activity role is filled by Lys2581. Positions 2597-2600 (VIDL) are SUMO-interacting motif (SIM). S-adenosyl-L-methionine-binding residues include Gly2606, Trp2607, Thr2624, Lys2625, His2630, Glu2631, Asp2651, Val2652, Asp2666, and Ile2667. The For 2'-O-MTase activity role is filled by Asp2666. 2669-2675 (ESSSSPE) lines the GTP pocket. Lys2702 (for 2'-O-MTase activity) is an active-site residue. Residue 2733–2735 (RNS) coordinates GTP. Glu2738 acts as the For 2'-O-MTase activity in catalysis. Residue Tyr2740 participates in S-adenosyl-L-methionine binding. Residues 2908-2914 (KHKRPRV) carry the Nuclear localization signal (NLS) motif. Glu2959, His2963, Cys2968, and Cys2971 together coordinate Zn(2+). In terms of domain architecture, RdRp catalytic spans 3049 to 3199 (GRMYADDTAG…KPIDDRFAHA (151 aa)). The Zn(2+) site is built by His3234, Cys3250, and Cys3369.

In the N-terminal section; belongs to the class I-like SAM-binding methyltransferase superfamily. mRNA cap 0-1 NS5-type methyltransferase family. Homodimer. Interacts with host SERTAD3; this interaction promotes capsid protein C degradation. Interacts with host CAPRIN1; this interaction is probably linked to the inhibition of stress granules formation by the virus. Interacts with host G3BP1; this interaction is probably linked to the inhibition of stress granules formation by the virus. In terms of assembly, forms heterodimers with envelope protein E in the endoplasmic reticulum and Golgi. Interacts with non-structural protein 2A. As to quaternary structure, homodimer; in the endoplasmic reticulum and Golgi. Interacts with host TYRO3, AXL and DC-SIGN proteins. Interacts with non-structural protein 2A. Interacts with host HAVCR1; this interaction likely mediates virus attachment to host cell. Interacts with host NCAM1. Interacts with host HSPA5. Interacts with Aedes aegypti SRPN25, APY and venom allergen-1 salivary proteins; the interactions do not affect Zika virus replication in human endothelial cells and keratinocytes. Homodimer; Homohexamer when secreted. Interacts with host TBK1. Interacts with host USP8. Interacts with envelope protein E. In terms of assembly, interacts with the structural protein prM/E complex, and the NS2B/NS3 protease complex. As to quaternary structure, forms a heterodimer with serine protease NS3. May form homooligomers. Interacts with human SPCS1. Interacts with non-structural protein 2A. Forms a heterodimer with NS2B. Interacts with NS4B. Interacts with unphosphorylated RNA-directed RNA polymerase NS5; this interaction stimulates RNA-directed RNA polymerase NS5 guanylyltransferase activity. Interacts with non-structural protein 2A. Interacts with host SHFL; this interaction promotes NS3 degradation via a lysosome-dependent pathway. Interacts with host CEP63; this interaction disorganizes the centrosome and inhibits host innate immune response. In terms of assembly, may interact with host ANKLE2; the interaction may cause defects in brain development, such as microcephaly. May interact with host SRPRA and SEC61G. As to quaternary structure, interacts with serine protease NS3. Interacts with NS1. Homodimer. Interacts with host STAT2; this interaction inhibits the phosphorylation of the latter, and, when all viral proteins are present (polyprotein), targets STAT2 for degradation. Interacts with host TBK1 and IKBKE; these interactions lead to the inhibition of the host RIG-I signaling pathway. Interacts with host PAF1 complex; the interaction may prevent the recruitment of the host PAF1 complex to interferon-responsive genes, and thus reduces the immune response. Interacts with serine protease NS3. Interacts with host KPNA2. Interacts with host ZSWIM8; this interaction allows STAT2 binding to ZSWIM8 and subsequent proteasomal degradation leading to inhibition of interferon signaling. Post-translationally, specific enzymatic cleavages in vivo yield mature proteins. Cleavages in the lumen of endoplasmic reticulum are performed by host signal peptidase, whereas cleavages in the cytoplasmic side are performed by serine protease NS3. Signal cleavage at the 2K-4B site requires a prior NS3 protease-mediated cleavage at the 4A-2K site. In terms of processing, cleaved in post-Golgi vesicles by a host furin, releasing the mature small envelope protein M, and peptide pr. This cleavage is incomplete as up to 30% of viral particles still carry uncleaved prM. N-glycosylation plays a role in virulence in mammalian and mosquito hosts, but may have no effect on neurovirulence. Post-translationally, ubiquitination by host TRIM7 promotes virus attachment and fusion of the virus and the host endosome membrane. In terms of processing, N-glycosylated. The excreted form is glycosylated, which is required for efficient secretion of the protein from infected cells. Ubiquitination by host TRIM22 leads to proteasomal degradation. Post-translationally, acetylated by host KAT5. Acetylation modulates NS3 RNA-binding and unwinding activities and plays an important positive role for viral replication. In terms of processing, phosphorylated on serines residues. This phosphorylation may trigger NS5 nuclear localization. Sumoylated, required for regulating IFN induced interferon stimulated genes/ISGs.

It localises to the virion. Its subcellular location is the host nucleus. The protein localises to the host cytoplasm. The protein resides in the host perinuclear region. It is found in the secreted. It localises to the virion membrane. Its subcellular location is the host endoplasmic reticulum membrane. The protein localises to the host cell surface. It catalyses the reaction a 5'-end (5'-triphosphoguanosine)-ribonucleoside in mRNA + S-adenosyl-L-methionine = a 5'-end (N(7)-methyl 5'-triphosphoguanosine)-ribonucleoside in mRNA + S-adenosyl-L-homocysteine. The enzyme catalyses a 5'-end (N(7)-methyl 5'-triphosphoguanosine)-ribonucleoside in mRNA + S-adenosyl-L-methionine = a 5'-end (N(7)-methyl 5'-triphosphoguanosine)-(2'-O-methyl-ribonucleoside) in mRNA + S-adenosyl-L-homocysteine + H(+). The catalysed reaction is RNA(n) + a ribonucleoside 5'-triphosphate = RNA(n+1) + diphosphate. It carries out the reaction Selective hydrolysis of -Xaa-Xaa-|-Yaa- bonds in which each of the Xaa can be either Arg or Lys and Yaa can be either Ser or Ala.. It catalyses the reaction a ribonucleoside 5'-triphosphate + H2O = a ribonucleoside 5'-diphosphate + phosphate + H(+). The enzyme catalyses ATP + H2O = ADP + phosphate + H(+). In terms of biological role, plays a role in virus budding by binding to the cell membrane and gathering the viral RNA into a nucleocapsid that forms the core of the mature virus particle. During virus entry, may induce genome penetration into the host cytoplasm after hemifusion induced by the surface proteins. Can migrate to the cell nucleus where it modulates host functions. Inhibits the integrated stress response (ISR) in the infected cell. Its function is as follows. Inhibits RNA silencing by interfering with host Dicer. Prevents premature fusion activity of envelope proteins in trans-Golgi by binding to envelope protein E at pH 6.0. After virion release in extracellular space, gets dissociated from E dimers. Functionally, plays a role in host immune defense modulation and protection of envelope protein E during virion synthesis. PrM-E cleavage is inefficient, many virions are only partially matured and immature prM-E proteins could play a role in immune evasion. Contributes to fetal microcephaly in humans. Acts as a chaperone for envelope protein E during intracellular virion assembly by masking and inactivating envelope protein E fusion peptide. prM is the only viral peptide matured by host furin in the trans-Golgi network probably to avoid catastrophic activation of the viral fusion activity in acidic Golgi compartment prior to virion release. In terms of biological role, may play a role in virus budding. Exerts cytotoxic effects by activating a mitochondrial apoptotic pathway through M ectodomain. May display a viroporin activity. Its function is as follows. Binds to host cell surface receptors and mediates fusion between viral and cellular membranes. Efficient virus attachment to cell is, at least in part, mediated by host HAVCR1 in a cell-type specific manner. In addition, host NCAM1 can also be used as entry receptor. Interaction with host HSPA5 plays an important role in the early stages of infection as well. Envelope protein is synthesized in the endoplasmic reticulum and forms a heterodimer with protein prM. The heterodimer plays a role in virion budding in the ER, and the newly formed immature particle is covered with 60 spikes composed of heterodimers between precursor prM and envelope protein E. The virion is transported to the Golgi apparatus where the low pH causes the dissociation of PrM-E heterodimers and formation of E homodimers. PrM-E cleavage is inefficient, many virions are only partially matured and immature prM-E proteins could play a role in immune evasion. Plays a role in the inhibition of host RLR-induced interferon-beta activation by targeting TANK-binding kinase 1/TBK1. In addition, recruits the host deubiquitinase USP8 to cleave 'Lys-11'-linked polyubiquitin chains from caspase-1/CASP1 thus inhibiting its proteasomal degradation. In turn, stabilized CASP1 promotes cleavage of cGAS, which inhibits its ability to recognize mitochondrial DNA release and initiate type I interferon signaling. Functionally, component of the viral RNA replication complex that recruits genomic RNA, the structural protein prM/E complex, and the NS2B/NS3 protease complex to the virion assembly site and orchestrates virus morphogenesis. Also antagonizes the host alpha/beta interferon antiviral response. May disrupt adherens junction formation and thereby impair proliferation of radial cells in the host cortex. In terms of biological role, required cofactor for the serine protease function of NS3. Its function is as follows. Displays three enzymatic activities: serine protease, NTPase and RNA helicase. NS3 serine protease, in association with NS2B, performs its autocleavage and cleaves the polyprotein at dibasic sites in the cytoplasm: C-prM, NS2A-NS2B, NS2B-NS3, NS3-NS4A, NS4A-2K and NS4B-NS5. NS3 RNA helicase binds RNA and unwinds dsRNA in the 3' to 5' direction. Leads to translation arrest when expressed ex vivo. Disrupts host centrosome organization in a CEP63-dependent manner to degrade host TBK1 and inhibits innate immune response. Inhibits the integrated stress response (ISR) in the infected cell. Regulates the ATPase activity of the NS3 helicase activity. NS4A allows NS3 helicase to conserve energy during unwinding. Cooperatively with NS4B suppresses the Akt-mTOR pathway and leads to cellular dysregulation. By inhibiting host ANKLE2 functions, may cause defects in brain development, such as microcephaly. Also antagonizes the host MDA5-mediated induction of alpha/beta interferon antiviral response. Leads to translation arrest when expressed ex vivo. Inhibits the integrated stress response (ISR) in the infected cell. Functionally, functions as a signal peptide for NS4B and is required for the interferon antagonism activity of the latter. In terms of biological role, induces the formation of ER-derived membrane vesicles where the viral replication takes place. Also plays a role in the inhibition of host RLR-induced interferon-beta production at TANK-binding kinase 1/TBK1 level. Cooperatively with NS4A suppresses the Akt-mTOR pathway and leads to cellular dysregulation. Its function is as follows. Replicates the viral (+) and (-) RNA genome, and performs the capping of genomes in the cytoplasm. Methylates viral RNA cap at guanine N-7 and ribose 2'-O positions. Once sufficient NS5 is expressed, binds to the cap-proximal structure and inhibits further translation of the viral genome. Besides its role in RNA genome replication, also prevents the establishment of a cellular antiviral state by blocking the interferon-alpha/beta (IFN-alpha/beta) signaling pathway. Mechanistically, interferes with host kinases TBK1 and IKKE upstream of interferon regulatory factor 3/IRF3 to inhibit the RIG-I pathway. Also antagonizes type I interferon signaling by targeting STAT2 for degradation by the proteasome thereby preventing activation of JAK-STAT signaling pathway. Mechanistically, acts as a scaffold protein to connect host ZSWIM8/CUL3 ligase complex and STAT2, leading to STAT2 degradation. Within the host nucleus, disrupts host SUMO1 and STAT2 co-localization with PML, resulting in PML degradation. May also reduce immune responses by preventing the recruitment of the host PAF1 complex to interferon-responsive genes. The sequence is that of Genome polyprotein from Zika virus (isolate ZIKV/Human/Cambodia/FSS13025/2010) (ZIKV).